Reading from the N-terminus, the 156-residue chain is MPRRGPVTPREIPPDPVYNSVLVQKLINKVMLDGKKSIAEKIVYGAMDIIREKTKQDPLTVLEKAVQNVTPLLEVRPRRVGGATYQVPIEVPPRRGLSLALRWIVRAARERKGMPMKERLALEILDAFNNTGGAIKKRDEMHRMAEANKAFAHYRW.

The protein belongs to the universal ribosomal protein uS7 family. As to quaternary structure, part of the 30S ribosomal subunit. Contacts proteins S9 and S11.

One of the primary rRNA binding proteins, it binds directly to 16S rRNA where it nucleates assembly of the head domain of the 30S subunit. Is located at the subunit interface close to the decoding center, probably blocks exit of the E-site tRNA. The protein is Small ribosomal subunit protein uS7 of Dictyoglomus turgidum (strain DSM 6724 / Z-1310).